The following is a 130-amino-acid chain: Lysozyme C (130 aa).

Positions 1–130 (KTYERCELAR…VSPWIRDCGL (130 aa)) constitute a C-type lysozyme domain. 4 cysteine pairs are disulfide-bonded: Cys-6/Cys-128, Cys-30/Cys-116, Cys-65/Cys-81, and Cys-77/Cys-95. Catalysis depends on residues Glu-35 and Asp-53.

This sequence belongs to the glycosyl hydrolase 22 family. Monomer.

The protein resides in the secreted. The catalysed reaction is Hydrolysis of (1-&gt;4)-beta-linkages between N-acetylmuramic acid and N-acetyl-D-glucosamine residues in a peptidoglycan and between N-acetyl-D-glucosamine residues in chitodextrins.. In terms of biological role, lysozymes have primarily a bacteriolytic function; those in tissues and body fluids are associated with the monocyte-macrophage system and enhance the activity of immunoagents. This Chelonia mydas (Green sea-turtle) protein is Lysozyme C (LYZ).